The following is a 291-amino-acid chain: Malectin (291 aa).

The N-terminal stretch at 1–30 (MLRPRGAEGTAVALLRLLLLLLLLGPKLRG) is a signal peptide. Residues 31–268 (PGLGVVGAAG…TPNPYASDNS (238 aa)) lie on the Lumenal side of the membrane. Residues Tyr-81, Tyr-103, Tyr-130, Phe-131, and Asp-200 each coordinate a carbohydrate. The interval 220–264 (LQPHPGLEKKEEEEEEEEYDEGSNLKRQTNKNRVQSGPRTPNPYA) is disordered. Acidic residues predominate over residues 230–240 (EEEEEEEEYDE). A compositionally biased stretch (polar residues) spans 244–264 (LKRQTNKNRVQSGPRTPNPYA). N-linked (GlcNAc...) asparagine glycosylation is present at Asn-267. The chain crosses the membrane as a helical span at residues 269–289 (SLMFPILVAFGVFIPTLFCLC). Topologically, residues 290-291 (RL) are cytoplasmic.

This sequence belongs to the malectin family. As to quaternary structure, interacts with the oligosaccharyltransferase (OST) complex.

Its subcellular location is the endoplasmic reticulum membrane. In terms of biological role, carbohydrate-binding protein with a strong ligand preference for Glc2-N-glycan. May play a role in the early steps of protein N-glycosylation. The polypeptide is Malectin (Mus musculus (Mouse)).